Reading from the N-terminus, the 292-residue chain is AKT-interacting protein (292 aa).

Residues 1-63 (MNPLWSMSAG…TSPAPAAQST (63 aa)) form a disordered region. Over residues 14-23 (KRAEGEEKTL) the composition is skewed to basic and acidic residues. The residue at position 30 (Ser30) is a Phosphoserine. The region spanning 74–222 (YLEYSLLAEF…VVDSVKVCTA (149 aa)) is the UBC core domain.

Belongs to the ubiquitin-conjugating enzyme family. FTS subfamily. Component of the FTS/Hook/FHIP complex (FHF complex), composed of AKTIP/FTS, FHIP1B, and one or more members of the Hook family of proteins HOOK1, HOOK2, and HOOK3. Interacts directly with HOOK1, HOOK2 and HOOK3. The FHF complex associates with the homotypic vesicular sorting complex (the HOPS complex). Also interacts with AKT1. May interact with FHIP1A. As to expression, ubiquitous. Highest expression in kidney, testis and brain and lowest in spleen and liver.

The protein localises to the cytoplasm. Its subcellular location is the cell membrane. Functionally, component of the FTS/Hook/FHIP complex (FHF complex). The FHF complex may function to promote vesicle trafficking and/or fusion via the homotypic vesicular protein sorting complex (the HOPS complex). Regulates apoptosis by enhancing phosphorylation and activation of AKT1. Increases release of TNFSF6 via the AKT1/GSK3B/NFATC1 signaling cascade. FHF complex promotes the distribution of AP-4 complex to the perinuclear area of the cell. The chain is AKT-interacting protein (Aktip) from Mus musculus (Mouse).